Here is a 437-residue protein sequence, read N- to C-terminus: Type II methyltransferase M.HgiBI (437 aa).

The SAM-dependent MTase C5-type domain maps to 4 to 431 (FRFIDLFAGI…KALQCVKLFE (428 aa)). C75 is a catalytic residue.

This sequence belongs to the class I-like SAM-binding methyltransferase superfamily. C5-methyltransferase family.

The catalysed reaction is a 2'-deoxycytidine in DNA + S-adenosyl-L-methionine = a 5-methyl-2'-deoxycytidine in DNA + S-adenosyl-L-homocysteine + H(+). A methylase that recognizes the double-stranded sequence 5'-GGWCC-3', methylates C-? on both strands, and protects the DNA from cleavage by the HgiBI endonuclease. This system is less active than isoschizomeric RM.HgiEI. The protein is Type II methyltransferase M.HgiBI of Herpetosiphon aurantiacus (Herpetosiphon giganteus).